Here is a 1893-residue protein sequence, read N- to C-terminus: Transcription initiation factor TFIID subunit 1 (1893 aa).

Residues 1–435 (MGPGCDLLLR…VTQLHWEDDI (435 aa)) enclose the Protein kinase 1 domain. Position 137 is a phosphoserine; by autocatalysis (serine 137). Disordered stretches follow at residues 155-184 (LMPP…NGEG) and 197-224 (ASEK…AESE). A compositionally biased stretch (pro residues) spans 156–165 (MPPPPPPPGP). Over residues 197-208 (ASEKVDFSSSSD) the composition is skewed to low complexity. At serine 328 the chain carries Phosphoserine; by autocatalysis. Residues 534-557 (IPDEKEEATSNSPSKESKKESSLK) are disordered. The segment at 538-997 (KEEATSNSPS…KIPNKPTQQK (460 aa)) is histone acetyltransferase (HAT). Lysine 565 carries the post-translational modification N6-acetyllysine. Residues lysine 570 and lysine 583 each participate in a glycyl lysine isopeptide (Lys-Gly) (interchain with G-Cter in SUMO2) cross-link. 4 disordered regions span residues 990–1009 (PNKP…KKTV), 1128–1148 (MLQN…QERK), 1158–1177 (GSAA…VTSL), and 1254–1278 (RLKR…MKER). 2 stretches are compositionally biased toward basic and acidic residues: residues 995–1004 (QQKDDKEPQP) and 1139–1148 (SREREEQERK). A DNA-binding region (HMG box; involved in promoter binding) is located at residues 1216–1294 (VRIRTTKDEE…CGACGAIGHM (79 aa)). The segment covering 1254 to 1270 (RLKRNQEKEKLKGPPEK) has biased composition (basic and acidic residues). Residues 1363-1650 (VLKFPKQQLP…TAKEAALEEA (288 aa)) are interaction with ASF1A and ASF1B. A Nuclear localization signal motif is present at residues 1372-1379 (PPKKKRRV). Bromo domains are found at residues 1397 to 1505 (RRRT…LKEK) and 1519 to 1628 (LLDD…LTEY). The 448-residue stretch at 1446 to 1893 (MDLQTLRENV…AGDSDLDSDE (448 aa)) folds into the Protein kinase 2 domain. A disordered region spans residues 1651–1676 (ELESLDPMTPGPYTPQPPDLYDTNTS). The segment covering 1659 to 1668 (TPGPYTPQPP) has biased composition (pro residues). 5 positions are modified to phosphoserine: serine 1690, serine 1693, alanine 1718, glutamate 1721, and glycine 1723. The tract at residues 1696–1893 (DIPSATPEKQ…AGDSDLDSDE (198 aa)) is disordered. Acidic residues-rich tracts occupy residues 1709–1723 (EGED…EEEG) and 1741–1756 (EGED…EEGD). 3 positions are modified to phosphoserine: serine 1799, serine 1802, and serine 1820. Polar residues predominate over residues 1830 to 1840 (KSNTQDTSFSS). The span at 1846-1857 (VSEEEEDEEEEE) shows a compositional bias: acidic residues. The residue at position 1847 (serine 1847) is a Phosphoserine. Residues 1860 to 1869 (SGPSVLSQVH) show a composition bias toward polar residues.

This sequence belongs to the TAF1 family. Component of the TFIID basal transcription factor complex, composed of TATA-box-binding protein TBP, and a number of TBP-associated factors (TAFs), including TAF1, TAF2, TAF3, TAF4, TAF5, TAF6, TAF7, TAF8, TAF9, TAF10, TAF11, TAF12 and TAF13. Interacts with TAF7; the interaction is direct. TAF1, when part of the TFIID complex, interacts with C-terminus of TP53. Part of a TFIID-containing RNA polymerase II pre-initiation complex that is composed of TBP and at least GTF2A1, GTF2A2, GTF2E1, GTF2E2, GTF2F1, GTF2H2, GTF2H3, GTF2H4, GTF2H5, GTF2B, TCEA1, ERCC2, ERCC3, TAF1, TAF2, TAF3, TAF4, TAF5, TAF6, TAF7, TAF8, TAF9, TAF10, TAF11, TAF12 and TAF13. Component of some MLL1/MLL complex, at least composed of the core components KMT2A/MLL1, ASH2L, HCFC1/HCF1, WDR5 and RBBP5, as well as the facultative components BACC1, CHD8, E2F6, HSP70, INO80C, KANSL1, LAS1L, MAX, MCRS1, MGA, KAT8/MOF, PELP1, PHF20, PRP31, RING2, RUVB1/TIP49A, RUVB2/TIP49B, SENP3, TAF1, TAF4, TAF6, TAF7, TAF9 and TEX10. RB1 interacts with the N-terminal domain of TAF1. Interacts with ASF1A and ASF1B. Interacts (via bromo domains) with acetylated lysine residues on the N-terminus of histone H1.4, H2A, H2B, H3 and H4 (in vitro). As to quaternary structure, (Microbial infection) Interacts with SV40 Large T antigen. In terms of assembly, (Microbial infection) Interacts with herpes simplex virus 1 ICP4. The cofactor is Mg(2+). Phosphorylated by casein kinase II in vitro.

The protein localises to the nucleus. It catalyses the reaction L-seryl-[protein] + ATP = O-phospho-L-seryl-[protein] + ADP + H(+). The enzyme catalyses L-threonyl-[protein] + ATP = O-phospho-L-threonyl-[protein] + ADP + H(+). The catalysed reaction is L-lysyl-[protein] + acetyl-CoA = N(6)-acetyl-L-lysyl-[protein] + CoA + H(+). With respect to regulation, autophosphorylates on Ser residues. Inhibited by retinoblastoma tumor suppressor protein, RB1. Binding to TAF7 or CIITA inhibits the histone acetyltransferase activity. In terms of biological role, the TFIID basal transcription factor complex plays a major role in the initiation of RNA polymerase II (Pol II)-dependent transcription. TFIID recognizes and binds promoters with or without a TATA box via its subunit TBP, a TATA-box-binding protein, and promotes assembly of the pre-initiation complex (PIC). The TFIID complex consists of TBP and TBP-associated factors (TAFs), including TAF1, TAF2, TAF3, TAF4, TAF5, TAF6, TAF7, TAF8, TAF9, TAF10, TAF11, TAF12 and TAF13. TAF1 is the largest component and core scaffold of the TFIID complex, involved in nucleating complex assembly. TAF1 forms a promoter DNA binding subcomplex of TFIID, together with TAF7 and TAF2. Contains novel N- and C-terminal Ser/Thr kinase domains which can autophosphorylate or transphosphorylate other transcription factors. Phosphorylates TP53 on 'Thr-55' which leads to MDM2-mediated degradation of TP53. Phosphorylates GTF2A1 and GTF2F1 on Ser residues. Possesses DNA-binding activity. Essential for progression of the G1 phase of the cell cycle. Exhibits histone acetyltransferase activity towards histones H3 and H4. This Homo sapiens (Human) protein is Transcription initiation factor TFIID subunit 1.